The primary structure comprises 267 residues: Small ribosomal subunit protein uS2 (267 aa).

Residues 234-267 form a disordered region; that stretch reads DNAEEELAEAISQEEPSAAEELPDDMADNENEFE. Residues 250 to 267 show a composition bias toward acidic residues; sequence SAAEELPDDMADNENEFE.

Belongs to the universal ribosomal protein uS2 family.

In Dichelobacter nodosus (strain VCS1703A), this protein is Small ribosomal subunit protein uS2.